Reading from the N-terminus, the 276-residue chain is Chymotrypsin (276 aa).

The N-terminal stretch at 1–16 is a signal peptide; the sequence is MKVALVVLALFGVSLA. The propeptide at 17 to 45 is activation peptide; the sequence is ASIDNIEIPPSKNIYVEPINQPEVDPSLE. Positions 46-272 constitute a Peptidase S1 domain; it reads IVNGQEVVPH…YLNWLQTHSE (227 aa). A disulfide bridge links cysteine 74 with cysteine 90. Active-site charge relay system residues include histidine 89 and aspartate 135. 2 N-linked (GlcNAc...) asparagine glycosylation sites follow: asparagine 144 and asparagine 193. 2 disulfide bridges follow: cysteine 202–cysteine 215 and cysteine 225–cysteine 250. Serine 229 (charge relay system) is an active-site residue.

Belongs to the peptidase S1 family. As to expression, expressed in larval carcasses and gut, and adult gut.

The protein localises to the secreted. Its subcellular location is the extracellular space. It catalyses the reaction Preferential cleavage: Tyr-|-Xaa, Trp-|-Xaa, Phe-|-Xaa, Leu-|-Xaa.. In terms of biological role, serine protease with chymotryptic and collagenolytic activities. The chain is Chymotrypsin from Phaedon cochleariae (Mustard beetle).